The sequence spans 448 residues: Antizyme inhibitor 1 (448 aa).

This sequence belongs to the Orn/Lys/Arg decarboxylase class-II family. ODC antizyme inhibitor subfamily. In terms of assembly, monomer. Interacts with OAZ1 and OAZ3; this interaction disrupts the interaction between the antizyme and ODC1. In terms of processing, ubiquitinated, leading to its proteasomal degradation; a process that is reduced in presence of antizyme OAZ1.

The protein localises to the nucleus. Antizyme inhibitor (AZI) protein that positively regulates ornithine decarboxylase (ODC) activity and polyamine uptake. AZI is an enzymatically inactive ODC homolog that counteracts the negative effect of ODC antizymes (AZs) OAZ1, OAZ2 and OAZ3 on ODC activity by competing with ODC for antizyme-binding. Inhibits antizyme-dependent ODC degradation and releases ODC monomers from their inactive complex with antizymes, leading to formation of the catalytically active ODC homodimer and restoring polyamine production. The polypeptide is Antizyme inhibitor 1 (AZIN1) (Pongo abelii (Sumatran orangutan)).